We begin with the raw amino-acid sequence, 314 residues long: 2,3-dihydroxyphenylpropionate/2,3-dihydroxicinnamic acid 1,2-dioxygenase (314 aa).

Histidine 115 functions as the Proton donor in the catalytic mechanism. The Proton acceptor role is filled by histidine 179.

It belongs to the LigB/MhpB extradiol dioxygenase family. As to quaternary structure, homotetramer. The cofactor is Fe(2+).

It carries out the reaction 3-(2,3-dihydroxyphenyl)propanoate + O2 = (2Z,4E)-2-hydroxy-6-oxonona-2,4-dienedioate + H(+). The catalysed reaction is (2E)-3-(2,3-dihydroxyphenyl)prop-2-enoate + O2 = (2Z,4E,7E)-2-hydroxy-6-oxonona-2,4,7-trienedioate + H(+). It functions in the pathway aromatic compound metabolism; 3-phenylpropanoate degradation. In terms of biological role, catalyzes the non-heme iron(II)-dependent oxidative cleavage of 2,3-dihydroxyphenylpropionic acid and 2,3-dihydroxicinnamic acid into 2-hydroxy-6-ketononadienedioate and 2-hydroxy-6-ketononatrienedioate, respectively. The chain is 2,3-dihydroxyphenylpropionate/2,3-dihydroxicinnamic acid 1,2-dioxygenase from Rhodococcus globerulus.